The chain runs to 228 residues: UPF0758 protein CLB_3028 (228 aa).

The 123-residue stretch at 106 to 228 (KISTPLDVSN…YVSMKEKGTI (123 aa)) folds into the MPN domain. Residues His-177, His-179, and Asp-190 each coordinate Zn(2+). Positions 177-190 (HNHPSGDPTPSKED) match the JAMM motif motif.

The protein belongs to the UPF0758 family.

The sequence is that of UPF0758 protein CLB_3028 from Clostridium botulinum (strain ATCC 19397 / Type A).